A 221-amino-acid polypeptide reads, in one-letter code: GTPase Obg (221 aa).

The region spanning 1 to 61 (PSALRLVLLN…LKYKLLEIVQ (61 aa)) is the OBG-type G domain. GTP is bound by residues 10-13 (NKAD) and 42-44 (SAV). The OCT domain occupies 82 to 162 (VVHRTKGQFQ…IGGISFEWEP (81 aa)).

The protein belongs to the TRAFAC class OBG-HflX-like GTPase superfamily. OBG GTPase family. In terms of assembly, monomer. It depends on Mg(2+) as a cofactor.

It localises to the cytoplasm. An essential GTPase which binds GTP, GDP and possibly (p)ppGpp with moderate affinity, with high nucleotide exchange rates and a fairly low GTP hydrolysis rate. Plays a role in control of the cell cycle, stress response, ribosome biogenesis and in those bacteria that undergo differentiation, in morphogenesis control. In Corynebacterium melassecola, this protein is GTPase Obg.